The primary structure comprises 327 residues: Glycerol-3-phosphate dehydrogenase [NAD(P)+] (327 aa).

NADPH is bound by residues Trp13, His33, and Lys102. Lys102, Gly130, and Ser132 together coordinate sn-glycerol 3-phosphate. An NADPH-binding site is contributed by Ala134. Sn-glycerol 3-phosphate contacts are provided by Lys185, Asp238, Ser248, Arg249, and Asn250. Lys185 acts as the Proton acceptor in catalysis. Arg249 contributes to the NADPH binding site. Position 275 (Glu275) interacts with NADPH.

The protein belongs to the NAD-dependent glycerol-3-phosphate dehydrogenase family.

The protein resides in the cytoplasm. It catalyses the reaction sn-glycerol 3-phosphate + NAD(+) = dihydroxyacetone phosphate + NADH + H(+). It carries out the reaction sn-glycerol 3-phosphate + NADP(+) = dihydroxyacetone phosphate + NADPH + H(+). The protein operates within membrane lipid metabolism; glycerophospholipid metabolism. Functionally, catalyzes the reduction of the glycolytic intermediate dihydroxyacetone phosphate (DHAP) to sn-glycerol 3-phosphate (G3P), the key precursor for phospholipid synthesis. This is Glycerol-3-phosphate dehydrogenase [NAD(P)+] from Vesicomyosocius okutanii subsp. Calyptogena okutanii (strain HA).